The primary structure comprises 225 residues: Thymidine kinase (225 aa).

Residue G8–T15 coordinates ATP. The Proton acceptor role is filled by E92. Y122 serves as a coordination point for substrate. 2 residues coordinate Zn(2+): C147 and C150. K167–G171 contributes to the substrate binding site. Zn(2+) is bound by residues C180 and C183. Polar residues predominate over residues S197 to S207. Residues S197 to S225 are disordered. A compositionally biased stretch (basic and acidic residues) spans E208 to S225.

The protein belongs to the thymidine kinase family.

The enzyme catalyses thymidine + ATP = dTMP + ADP + H(+). This Acanthamoeba polyphaga mimivirus (APMV) protein is Thymidine kinase (TK).